The sequence spans 320 residues: Apolipoprotein E (320 aa).

The signal sequence occupies residues 1-18 (MKVLWAALLVAFLAGCQG). 8 tandem repeats follow at residues 82 to 103 (ALMEETMKELKAYKSELEEQLS), 104 to 125 (PVAEETRARLSKELQAAQARLG), 126 to 147 (ADMEDVRSRLAQYRSEVQAMLG), 148 to 169 (QSTDELRARLASHLRKLRKRLL), 170 to 191 (RDVDDLQKRLAVYQAGAREGAE), 192 to 213 (RGVSAIRERLGTLVEQGRARAA), 214 to 236 (TVGSSLASQPLQERAQAWGERLR), and 237 to 258 (ARMEEVGSRTRDRLDEVKEQVE). The segment at 82 to 258 (ALMEETMKEL…RLDEVKEQVE (177 aa)) is 8 X 22 AA approximate tandem repeats. Met145 carries the post-translational modification Methionine sulfoxide. Residue Ser149 is modified to Phosphoserine. The LDL and other lipoprotein receptors binding stretch occupies residues 160 to 170 (HLRKLRKRLLR). Heparin is bound at residue 164 to 167 (LRKR). The interval 212 to 293 (AATVGSSLAS…SWFEPLVEDM (82 aa)) is lipid-binding and lipoprotein association. Residue Thr214 is glycosylated (O-linked (GalNAc...) threonine). 232–239 (GERLRARM) lines the heparin pocket. The segment at 269–320 (QQMRLQAEAFQARLKSWFEPLVEDMQRQWAGLVEKVQAAVGASTTPVPSDNH) is homooligomerization. The tract at residues 281-293 (RLKSWFEPLVEDM) is specificity for association with VLDL.

Belongs to the apolipoprotein A1/A4/E family. Homotetramer. May interact with ABCA1; functionally associated with ABCA1 in the biogenesis of HDLs. May interact with APP/A4 amyloid-beta peptide; the interaction is extremely stable in vitro but its physiological significance is unclear. May interact with MAPT. May interact with MAP2. In the cerebrospinal fluid, interacts with secreted SORL1. Interacts with PMEL; this allows the loading of PMEL luminal fragment on ILVs to induce fibril nucleation. In terms of processing, APOE exists as multiple glycosylated and sialylated glycoforms within cells and in plasma. The extent of glycosylation and sialylation are tissue and context specific. Post-translationally, glycated in plasma VLDL. Phosphorylated by FAM20C in the extracellular medium.

The protein localises to the secreted. It localises to the extracellular space. Its subcellular location is the extracellular matrix. It is found in the extracellular vesicle. The protein resides in the endosome. The protein localises to the multivesicular body. In terms of biological role, APOE is an apolipoprotein, a protein associating with lipid particles, that mainly functions in lipoprotein-mediated lipid transport between organs via the plasma and interstitial fluids. APOE is a core component of plasma lipoproteins and is involved in their production, conversion and clearance. Apolipoproteins are amphipathic molecules that interact both with lipids of the lipoprotein particle core and the aqueous environment of the plasma. As such, APOE associates with chylomicrons, chylomicron remnants, very low density lipoproteins (VLDL) and intermediate density lipoproteins (IDL) but shows a preferential binding to high-density lipoproteins (HDL). It also binds a wide range of cellular receptors including the LDL receptor/LDLR, the LDL receptor-related proteins LRP1, LRP2 and LRP8 and the very low-density lipoprotein receptor/VLDLR that mediate the cellular uptake of the APOE-containing lipoprotein particles. Finally, APOE also has a heparin-binding activity and binds heparan-sulfate proteoglycans on the surface of cells, a property that supports the capture and the receptor-mediated uptake of APOE-containing lipoproteins by cells. A main function of APOE is to mediate lipoprotein clearance through the uptake of chylomicrons, VLDLs, and HDLs by hepatocytes. APOE is also involved in the biosynthesis by the liver of VLDLs as well as their uptake by peripheral tissues ensuring the delivery of triglycerides and energy storage in muscle, heart and adipose tissues. By participating in the lipoprotein-mediated distribution of lipids among tissues, APOE plays a critical role in plasma and tissues lipid homeostasis. APOE is also involved in two steps of reverse cholesterol transport, the HDLs-mediated transport of cholesterol from peripheral tissues to the liver, and thereby plays an important role in cholesterol homeostasis. First, it is functionally associated with ABCA1 in the biogenesis of HDLs in tissues. Second, it is enriched in circulating HDLs and mediates their uptake by hepatocytes. APOE also plays an important role in lipid transport in the central nervous system, regulating neuron survival and sprouting. The sequence is that of Apolipoprotein E (APOE) from Cebus capucinus (White-faced sapajou).